Here is a 660-residue protein sequence, read N- to C-terminus: Neurexin-2-beta (660 aa).

The span at 1 to 10 (MPPGGSGQGG) shows a compositional bias: gly residues. A disordered region spans residues 1–27 (MPPGGSGQGGCPRRPPALAGPLPPPPP). The signal sequence occupies residues 1–46 (MPPGGSGQGGCPRRPPALAGPLPPPPPPPPLPLLLGLLLLLGAAEG). Residues 47 to 584 (ARVSSSLSTT…EVIRESSSTT (538 aa)) are Extracellular-facing. A Laminin G-like domain is found at 87–295 (TTYIFGKGGA…HLRLVGEGPS (209 aa)). Ca(2+) contacts are provided by Asp139 and Val156. Residue Asn186 is glycosylated (N-linked (GlcNAc...) asparagine). Ca(2+) is bound by residues Ile238 and Asn240. Residue Ser350 is glycosylated (O-linked (Xyl...) (heparan sulfate) serine). Disordered stretches follow at residues 408-458 (ATQD…LPPT) and 537-571 (EPRR…RGPP). An N-linked (GlcNAc...) asparagine glycan is attached at Asn561. The chain crosses the membrane as a helical span at residues 585–605 (GMVVGIVAAAALCILILLYAM). Over 606–660 (YKYRNRDEGSYQVDQSRNYISNSAQSNGAVVKEKAPAAPKTPSKAKKNKDKEYYV) the chain is Cytoplasmic. Positions 627–660 (NSAQSNGAVVKEKAPAAPKTPSKAKKNKDKEYYV) are disordered.

It belongs to the neurexin family. As to quaternary structure, interacts (via cytoplasmic C-terminal region) with CASK. Specific isoforms bind alpha-dystroglycan and neuroligins NLGN1, NLGN2 and NLGN3. Interacts with CBLN1, CBLN2 and, less avidly, with CBLN4. Interacts with CLSTN3. Post-translationally, O-glycosylated; contains heparan sulfate. Heparan sulfate attachment is required for synapse development by mediating interactions with neuroligins.

The protein resides in the presynaptic cell membrane. In terms of biological role, neuronal cell surface protein that may be involved in cell recognition and cell adhesion. This is Neurexin-2-beta from Mus musculus (Mouse).